The following is a 144-amino-acid chain: Small polypeptide DEVIL 18 (144 aa).

A compositionally biased stretch (low complexity) spans 30–58; the sequence is SFSTKTSSSSSKPVFTRSFSTKPTSYSSS. The disordered stretch occupies residues 30 to 89; sequence SFSTKTSSSSSKPVFTRSFSTKPTSYSSSEPIFRRSFSAKPTSSKSPFLSRSGSTKCPVD. A helical transmembrane segment spans residues 42-58; sequence PVFTRSFSTKPTSYSSS. A compositionally biased stretch (polar residues) spans 68-84; it reads AKPTSSKSPFLSRSGST. The interval 108–139 is required for DVL/RTFL small polypeptide activity; that stretch reads SVTRKCRNMAKEHKSRFYIMKRCVLMLVCWHK.

It belongs to the DVL/RTFL small polypeptides family.

The protein resides in the cell membrane. In terms of biological role, small polypeptide acting as a regulatory molecule which coordinates cellular responses required for differentiation, growth and development, probably by restricting polar cell proliferation in lateral organs and coordinating socket cell recruitment and differentiation at trichome sites. This Arabidopsis thaliana (Mouse-ear cress) protein is Small polypeptide DEVIL 18.